A 177-amino-acid chain; its full sequence is MSELSTVARPYAKAAFDFALEQGQLDKWQEMLQFSALVAENEQVVEYITSSLASGQISEIFLQICDDQLDQYGQNFIRVMAENKRLAILPEVFNRFNALRAEYEAIKKVIVVSATELSQAQEEKIAKAMEKRLGQKVRLTTEIDSTLLTGIIIKYDDIVIDGSSRGQLNRLTQALSL.

It belongs to the ATPase delta chain family. In terms of assembly, F-type ATPases have 2 components, F(1) - the catalytic core - and F(0) - the membrane proton channel. F(1) has five subunits: alpha(3), beta(3), gamma(1), delta(1), epsilon(1). F(0) has three main subunits: a(1), b(2) and c(10-14). The alpha and beta chains form an alternating ring which encloses part of the gamma chain. F(1) is attached to F(0) by a central stalk formed by the gamma and epsilon chains, while a peripheral stalk is formed by the delta and b chains.

Its subcellular location is the cell inner membrane. F(1)F(0) ATP synthase produces ATP from ADP in the presence of a proton or sodium gradient. F-type ATPases consist of two structural domains, F(1) containing the extramembraneous catalytic core and F(0) containing the membrane proton channel, linked together by a central stalk and a peripheral stalk. During catalysis, ATP synthesis in the catalytic domain of F(1) is coupled via a rotary mechanism of the central stalk subunits to proton translocation. In terms of biological role, this protein is part of the stalk that links CF(0) to CF(1). It either transmits conformational changes from CF(0) to CF(1) or is implicated in proton conduction. The polypeptide is ATP synthase subunit delta (Haemophilus ducreyi (strain 35000HP / ATCC 700724)).